The following is a 332-amino-acid chain: Palmitoyltransferase ZDHHC15B (332 aa).

Over Met1–Phe14 the chain is Cytoplasmic. A helical transmembrane segment spans residues Ser15–Phe35. Over Glu36 to Thr50 the chain is Lumenal. Residues Tyr51–Phe71 traverse the membrane as a helical segment. Topologically, residues Thr72–Lys166 are cytoplasmic. Residues Arg123–Ser173 form the DHHC domain. Residues Cys125 and Cys128 each contribute to the Zn(2+) site. Lys132 is a substrate binding site. The Zn(2+) site is built by His138, Cys139, Cys142, Cys145, and His152. Cys153 acts as the S-palmitoyl cysteine intermediate in catalysis. Cys159 provides a ligand contact to Zn(2+). A helical membrane pass occupies residues Phe167–Phe187. Over Gln188–Lys204 the chain is Lumenal. The chain crosses the membrane as a helical span at residues Phe205–His228. Topologically, residues Cys229–Ser332 are cytoplasmic. A disordered region spans residues Glu305–Ser332.

It belongs to the DHHC palmitoyltransferase family. Post-translationally, autopalmitoylated (in vitro).

The protein localises to the golgi apparatus membrane. It localises to the postsynaptic density. The catalysed reaction is L-cysteinyl-[protein] + hexadecanoyl-CoA = S-hexadecanoyl-L-cysteinyl-[protein] + CoA. It catalyses the reaction L-cysteinyl-[protein] + tetradecanoyl-CoA = S-tetradecanoyl-L-cysteinyl-[protein] + CoA. It carries out the reaction L-cysteinyl-[protein] + octadecanoyl-CoA = S-octadecanoyl-L-cysteinyl-[protein] + CoA. Palmitoyltransferase that catalyzes the addition of palmitate onto various protein substrates. Has no stringent fatty acid selectivity and in addition to palmitate can also transfer onto target proteins myristate from tetradecanoyl-CoA and stearate from octadecanoyl-CoA. May thereby regulate target proteins association and localization to membranes. In the nervous system, probably catalyzes the palmitoylation of synaptic proteins and is involved in the differentiation of dopaminergic neurons and the development of the diencephalon. The polypeptide is Palmitoyltransferase ZDHHC15B (zdhhc15b) (Danio rerio (Zebrafish)).